The following is a 442-amino-acid chain: UPF0597 protein HRM2_02820 (442 aa).

This sequence belongs to the UPF0597 family.

The protein is UPF0597 protein HRM2_02820 of Desulforapulum autotrophicum (strain ATCC 43914 / DSM 3382 / VKM B-1955 / HRM2) (Desulfobacterium autotrophicum).